We begin with the raw amino-acid sequence, 1154 residues long: PAN2-PAN3 deadenylation complex catalytic subunit pan2 (1154 aa).

WD repeat units follow at residues 20–59 (GLPT…RYTS), 102–145 (THDE…DKLR), and 276–315 (ATVS…HFNE). Positions 316 to 451 (MSKEVEFADV…GARISGESED (136 aa)) are linker. The 370-residue stretch at 452-821 (DPLLKYSNVE…SPCVLAFQVR (370 aa)) folds into the USP domain. Residues 870 to 1048 (VALDTEFVDL…IEDARMALRL (179 aa)) form the Exonuclease domain. D873, E875, D982, and D1041 together coordinate a divalent metal cation. Positions 1092–1154 (PGTAVTMQNN…GEFFTGSPLK (63 aa)) are disordered. Polar residues-rich tracts occupy residues 1096–1109 (VTMQ…TPST) and 1132–1141 (LTPSNGTFSG).

This sequence belongs to the peptidase C19 family. PAN2 subfamily. Forms a heterotrimer with an asymmetric homodimer of the regulatory subunit pan3 to form the poly(A)-nuclease (PAN) deadenylation complex. Requires a divalent metal cation as cofactor.

The protein localises to the cytoplasm. It catalyses the reaction Exonucleolytic cleavage of poly(A) to 5'-AMP.. With respect to regulation, positively regulated by the regulatory subunit pan3. Catalytic subunit of the poly(A)-nuclease (PAN) deadenylation complex, one of two cytoplasmic mRNA deadenylases involved in mRNA turnover. PAN specifically shortens poly(A) tails of RNA and the activity is stimulated by poly(A)-binding protein pab1. PAN deadenylation is followed by rapid degradation of the shortened mRNA tails by the CCR4-NOT complex. Deadenylated mRNAs are then degraded by two alternative mechanisms, namely exosome-mediated 3'-5' exonucleolytic degradation, or deadenylation-dependent mRNA decaping and subsequent 5'-3' exonucleolytic degradation by xrn1. May also be involved in post-transcriptional maturation of mRNA poly(A) tails. The polypeptide is PAN2-PAN3 deadenylation complex catalytic subunit pan2 (Emericella nidulans (strain FGSC A4 / ATCC 38163 / CBS 112.46 / NRRL 194 / M139) (Aspergillus nidulans)).